A 394-amino-acid polypeptide reads, in one-letter code: Proliferation-associated protein 2G4 (394 aa).

An N-acetylserine modification is found at Ser-2. Position 2 is a phosphoserine (Ser-2). The segment at 2–48 (SGEDEQQEQTIAEDLVVTKYKMGGDIANRVLRSLVEASSSGVSVLSL) is necessary for nucleolar localization. An RNA-binding region spans residues 46–54 (LSLCEKGDA). A Glycyl lysine isopeptide (Lys-Gly) (interchain with G-Cter in SUMO2) cross-link involves residue Lys-298. The necessary for nucleolar localization stretch occupies residues 301–394 (LLQPFNVLYE…ETLEENEAGD (94 aa)). A Phosphoserine modification is found at Ser-335. The interval 358–394 (LQSSASRKTQKKKKKKASKTAENATSGETLEENEAGD) is disordered. A Phosphoserine; by PKC/PRKCD modification is found at Ser-361. The interval 361–375 (SASRKTQKKKKKKAS) is interaction with RNA. Over residues 365-375 (KTQKKKKKKAS) the composition is skewed to basic residues. Thr-366 and Thr-386 each carry phosphothreonine.

It belongs to the peptidase M24 family. In terms of assembly, isoform 2 interacts with the cytoplasmic domain of non-phosphorylated ERBB3; the interaction requires PKC activity. Interacts with AR. Treatment with HRG leads to dissociation from ERBB3 and increases association with AR. Interacts with NCL/nucleolin. Component of a ribonucleoprotein complex containing at least PA2G4, NCL, TOP1, PABPC2, RPLP0, acetylated histone H1 (HIST1H1A or H1F1), histone H1 2/4, RPL4, RPL8, RPL15, RPL18, RPL18A, RPL21, RPL11, RPL12, RPL28, RPL27, RPLP2 and RPL24. Interacts with HDAC2. Interacts with RB1; the interaction is enhanced upon PA2G4 dephosphorylation. Interacts with AKT1. Isoform 1 and isoform 2 interact with RNF20. Isoform 2 interacts with HUWE1. Interacts with DNAJC21. Post-translationally, phosphorylated on serine and threonine residues. Phosphorylation is enhanced by HRG treatment. Basal phosphorylation is PKC-dependent and HRG-induced phosphorylation is predominantly PKC-independent. Phosphorylation at Ser-361 by PKC/PRKCD regulates its nucleolar localization. In cancer cells, isoform 2 is polyubiquitinated leading to its proteasomal degradation and phosphorylation by PKC/PRKCD enhances polyubiquitination. Isoform 2 is undetectable whereas isoform 1 is strongly expressed in cancer cells (at protein level). Isoform 1 and isoform 2 are widely expressed, including heart, brain, lung, pancreas, skeletal muscle, kidney, placenta and liver.

The protein localises to the cytoplasm. Its subcellular location is the nucleus. The protein resides in the nucleolus. May play a role in a ERBB3-regulated signal transduction pathway. Seems be involved in growth regulation. Acts a corepressor of the androgen receptor (AR) and is regulated by the ERBB3 ligand neuregulin-1/heregulin (HRG). Inhibits transcription of some E2F1-regulated promoters, probably by recruiting histone acetylase (HAT) activity. Binds RNA. Associates with 28S, 18S and 5.8S mature rRNAs, several rRNA precursors and probably U3 small nucleolar RNA. May be involved in regulation of intermediate and late steps of rRNA processing. May be involved in ribosome assembly. Mediates cap-independent translation of specific viral IRESs (internal ribosomal entry site). Regulates cell proliferation, differentiation, and survival. Isoform 1 suppresses apoptosis whereas isoform 2 promotes cell differentiation. The chain is Proliferation-associated protein 2G4 (PA2G4) from Homo sapiens (Human).